Reading from the N-terminus, the 272-residue chain is NH(3)-dependent NAD(+) synthetase (272 aa).

43–50 is a binding site for ATP; sequence GLSGGQDS. Aspartate 49 contributes to the Mg(2+) binding site. Residue arginine 138 participates in deamido-NAD(+) binding. Threonine 158 provides a ligand contact to ATP. Glutamate 163 contacts Mg(2+). 2 residues coordinate deamido-NAD(+): lysine 171 and aspartate 178. 2 residues coordinate ATP: lysine 187 and threonine 209. A deamido-NAD(+)-binding site is contributed by 258–259; sequence HK.

It belongs to the NAD synthetase family. In terms of assembly, homodimer.

It carries out the reaction deamido-NAD(+) + NH4(+) + ATP = AMP + diphosphate + NAD(+) + H(+). It participates in cofactor biosynthesis; NAD(+) biosynthesis; NAD(+) from deamido-NAD(+) (ammonia route): step 1/1. In terms of biological role, catalyzes the ATP-dependent amidation of deamido-NAD to form NAD. Uses ammonia as a nitrogen source. This Halalkalibacterium halodurans (strain ATCC BAA-125 / DSM 18197 / FERM 7344 / JCM 9153 / C-125) (Bacillus halodurans) protein is NH(3)-dependent NAD(+) synthetase.